The chain runs to 312 residues: Taste receptor type 2 member 103 (312 aa).

The Extracellular segment spans residues 1-6 (MVLTIR). A helical transmembrane segment spans residues 7–27 (AILWVTLITIISLEFIIGILG). The Cytoplasmic segment spans residues 28–61 (NVFIALVNIIDWVKRGKISAVDKTYMALAISRTA). The chain crosses the membrane as a helical span at residues 62–82 (FLLSLITGFLVSLLDPALLGM). Over 83–92 (RTMVRLLTIS) the chain is Extracellular. A helical transmembrane segment spans residues 93-113 (WMVTNHFSVWFATCLSIFYFL). Over 114-132 (KIANFSNSIFLVLKWEAKK) the chain is Cytoplasmic. Residues 133–153 (VVSVTLVVSVIILIMNIIVIN) form a helical membrane-spanning segment. Topologically, residues 154–185 (KFTDRLQVNTLQNCSTSNTLKDYGLFLFISTG) are extracellular. The N-linked (GlcNAc...) asparagine glycan is linked to Asn-166. Residues 186-206 (FTLTPFAVSLTMFLLLIFSLW) traverse the membrane as a helical segment. At 207-229 (RHLKNMCHSATGSRDVSTVAHIK) the chain is on the cytoplasmic side. A helical transmembrane segment spans residues 230-250 (GLQTVVTFLLLYTAFVMSLLS). At 251–264 (ESLNINIQHTNLLS) the chain is on the extracellular side. The helical transmembrane segment at 265–285 (HFLRSIGVAFPTGHSCVLILG) threads the bilayer. At 286–312 (NSKLRQASLSVILWLRYKYKHIENWGP) the chain is on the cytoplasmic side.

This sequence belongs to the G-protein coupled receptor T2R family. As to expression, expressed in subsets of taste receptor cells of the tongue and palate epithelium and exclusively in gustducin-positive cells. Expressed in 15% taste bud cells in circumvallate and foliate papillae but only in 2% in fungiform papillae.

The protein localises to the membrane. Functionally, gustducin-coupled receptor implicated in the perception of bitter compounds in the oral cavity and the gastrointestinal tract. Signals through PLCB2 and the calcium-regulated cation channel TRPM5. The chain is Taste receptor type 2 member 103 (Tas2r103) from Mus musculus (Mouse).